We begin with the raw amino-acid sequence, 444 residues long: Phosphoglucosamine mutase (444 aa).

S103 serves as the catalytic Phosphoserine intermediate. Positions 103, 241, 243, and 245 each coordinate Mg(2+). At S103 the chain carries Phosphoserine.

The protein belongs to the phosphohexose mutase family. Mg(2+) is required as a cofactor. Post-translationally, activated by phosphorylation.

The enzyme catalyses alpha-D-glucosamine 1-phosphate = D-glucosamine 6-phosphate. Catalyzes the conversion of glucosamine-6-phosphate to glucosamine-1-phosphate. The protein is Phosphoglucosamine mutase of Deinococcus radiodurans (strain ATCC 13939 / DSM 20539 / JCM 16871 / CCUG 27074 / LMG 4051 / NBRC 15346 / NCIMB 9279 / VKM B-1422 / R1).